The primary structure comprises 921 residues: Probable TonB-dependent receptor NMB1497 (921 aa).

A signal peptide spans 1-25 (MRSSFRLKPICFYLMGVTLYHYSYA). The TBDR plug domain occupies 53 to 174 (DKKVFTDARA…LAGSANLRTL (122 aa)). Positions 185 to 921 (TYGLLLKGLT…TFLMTMSYKF (737 aa)) constitute a TBDR beta-barrel domain. The short motif at 904–921 (LTNFARGRTFLMTMSYKF) is the TonB C-terminal box element.

This sequence belongs to the TonB-dependent receptor family.

The protein resides in the cell outer membrane. Its function is as follows. Probable receptor, TonB-dependent. The polypeptide is Probable TonB-dependent receptor NMB1497 (Neisseria meningitidis serogroup B (strain ATCC BAA-335 / MC58)).